We begin with the raw amino-acid sequence, 316 residues long: Nod factor export ATP-binding protein I (316 aa).

The 231-residue stretch at isoleucine 18–tyrosine 248 folds into the ABC transporter domain. Position 50–57 (glycine 50–serine 57) interacts with ATP.

The protein belongs to the ABC transporter superfamily. Lipooligosaccharide exporter (TC 3.A.1.102) family. In terms of assembly, the complex is composed of two ATP-binding proteins (NodI) and two transmembrane proteins (NodJ).

The protein localises to the cell inner membrane. Part of the ABC transporter complex NodIJ involved in the export of the nodulation factors (Nod factors), the bacterial signal molecules that induce symbiosis and subsequent nodulation induction. Nod factors are LCO (lipo-chitin oligosaccharide), a modified beta-1,4-linked N-acetylglucosamine oligosaccharide. This subunit is responsible for energy coupling to the transport system. This Rhizobium etli (strain ATCC 51251 / DSM 11541 / JCM 21823 / NBRC 15573 / CFN 42) protein is Nod factor export ATP-binding protein I.